Consider the following 350-residue polypeptide: MKPVFCGNFEYDAREGDLERLFRKYGKVERVDMKAGFAFVYMEDERDAEDAIRALDRFEFGRKGRRLRVEWTKSERGGDKRSGGGSRRSSSSMRPSKTLFVINFDADNTRTRDLEKHFEPYGKIVNVRIRRNFAFIQYEAQEDATRALDASNNSKLMDKVISVEYAVKDDDARGNGHSPERRRDRSPERRRRSPSPYKRERGSPDYGRGASPVAAYRKERTSPDYGRRRSPSPYKKSRRGSPEYGRDRRGNDSPRRRERVASPTKYSRSPNNKRERMSPNHSPFKKESPRNGVGEVESPIERRERSRSSPENGQVESPGSIGRRDSDGGYDGAESPMQKSRSPRSPPADE.

2 consecutive RRM domains span residues 2–74 and 97–168; these read KPVF…WTKS and KTLF…YAVK. Composition is skewed to basic and acidic residues over residues 73–82 and 167–187; these read KSERGGDKRS and VKDD…DRSP. Disordered stretches follow at residues 73-94 and 167-350; these read KSER…SSMR and VKDD…PADE. Residues S193, S195, and S211 each carry the phosphoserine modification. Composition is skewed to basic and acidic residues over residues 216-227 and 240-255; these read YRKERTSPDYGR and GSPE…DSPR. Phosphoserine is present on residues S241, S262, S278, S298, S308, S335, and S340. Residues 272-289 show a composition bias toward basic and acidic residues; the sequence is NKRERMSPNHSPFKKESP. A compositionally biased stretch (basic and acidic residues) spans 299-308; it reads PIERRERSRS.

The protein belongs to the splicing factor SR family. RS subfamily. Component of the spliceosome. Interacts with SNRNP35. Interacts with CYP59. Interacts with RCF3 and CPL1. Interacts with DRB1/HYL1 and SE. As to expression, highly expressed in roots and flowers. A presumably longer alternatively spliced form is found in leaves, stems and flowers.

It is found in the nucleus. Its subcellular location is the nucleus speckle. Functionally, required for constitutive and alternative pre-mRNA splicing. Involved in primary miRNA processing and pri-miRNA biogenesis. Binds both intronless and intron-containing pri-miRNAs. The protein is Serine/arginine-rich splicing factor RS40 (RS40) of Arabidopsis thaliana (Mouse-ear cress).